The sequence spans 747 residues: ATPase family gene 2 protein homolog B (747 aa).

M1 is subject to N-acetylmethionine. Residues 234 to 241 and 500 to 507 each bind ATP; these read GPPGVGKT and GPPGCAKT.

It belongs to the AAA ATPase family. AFG2 subfamily. As to quaternary structure, part of the 55LCC heterohexameric ATPase complex composed at least of AIRIM, AFG2A, AFG2B and CINP. Associates with pre-60S ribosomal particles. In terms of tissue distribution, in adult ear, expressed at low levels in neurosensory hair cells (inner and outer) and supporting cells (pillar and Deiter cells).

It is found in the cytoplasm. It localises to the cytoskeleton. The protein resides in the spindle. The protein localises to the nucleus. It catalyses the reaction ATP + H2O = ADP + phosphate + H(+). With respect to regulation, in the context of 55LCC heterohexameric ATPase complex, the ATPase activity is stimulated by DNA binding and inhibited in presence of RNA. Functionally, ATP-dependent chaperone part of the 55LCC heterohexameric ATPase complex which is chromatin-associated and promotes replisome proteostasis to maintain replication fork progression and genome stability. Required for replication fork progression, sister chromatid cohesion, and chromosome stability. The ATPase activity is specifically enhanced by replication fork DNA and is coupled to cysteine protease-dependent cleavage of replisome substrates in response to replication fork damage. Uses ATPase activity to process replisome substrates in S-phase, facilitating their proteolytic turnover from chromatin to ensure DNA replication and mitotic fidelity. Plays an essential role in the cytoplasmic maturation steps of pre-60S ribosomal particles by promoting the release of shuttling protein RSL24D1/RLP24 from the pre-ribosomal particles. This is ATPase family gene 2 protein homolog B (Afg2b) from Mus musculus (Mouse).